The chain runs to 388 residues: Galactokinase (388 aa).

33–36 lines the substrate pocket; sequence EHTD. ATP is bound by residues serine 67 and 124–130; that span reads GAGLSSS. Residues serine 130 and glutamate 162 each coordinate Mg(2+). The active-site Proton acceptor is the aspartate 174. Tyrosine 224 contributes to the substrate binding site.

This sequence belongs to the GHMP kinase family. GalK subfamily.

The protein resides in the cytoplasm. It catalyses the reaction alpha-D-galactose + ATP = alpha-D-galactose 1-phosphate + ADP + H(+). The protein operates within carbohydrate metabolism; galactose metabolism. Its function is as follows. Catalyzes the transfer of the gamma-phosphate of ATP to D-galactose to form alpha-D-galactose-1-phosphate (Gal-1-P). The protein is Galactokinase of Lacticaseibacillus paracasei (strain ATCC 334 / BCRC 17002 / CCUG 31169 / CIP 107868 / KCTC 3260 / NRRL B-441) (Lactobacillus paracasei).